We begin with the raw amino-acid sequence, 501 residues long: Glycoprotein 3-alpha-L-fucosyltransferase A (501 aa).

The Cytoplasmic segment spans residues 1-39; sequence MGVFSNLRGPKIGLTHEELPVVANGSTSSSSSPSSFKRK. Residues 40-60 traverse the membrane as a helical; Signal-anchor for type II membrane protein segment; that stretch reads VSTFLPICVALVVIIEIGFLC. At 61–501 the chain is on the lumenal side; that stretch reads RLDNASLVDT…PCPKFEVVFV (441 aa). N-linked (GlcNAc...) asparagine glycans are attached at residues Asn64, Asn337, Asn420, and Asn481.

It belongs to the glycosyltransferase 10 family. It depends on Mg(2+) as a cofactor. The cofactor is Mn(2+). Post-translationally, glycosylation may be important for enzymatic activity.

It localises to the golgi apparatus. Its subcellular location is the golgi stack membrane. The catalysed reaction is N(4)-{beta-D-GlcNAc-(1-&gt;2)-alpha-D-Man-(1-&gt;3)-[beta-D-GlcNAc-(1-&gt;2)-alpha-D-Man-(1-&gt;6)]-beta-D-Man-(1-&gt;4)-beta-D-GlcNAc-(1-&gt;4)-beta-D-GlcNAc}-L-asparaginyl-[protein] + GDP-beta-L-fucose = N(4)-{beta-D-GlcNAc-(1-&gt;2)-alpha-D-Man-(1-&gt;3)-[beta-D-GlcNAc-(1-&gt;2)-alpha-D-Man-(1-&gt;6)]-beta-D-Man-(1-&gt;4)-beta-D-GlcNAc-(1-&gt;4)-[alpha-L-Fuc(1-&gt;3)]-beta-D-GlcNAc}-L-asparaginyl-[protein] + GDP + H(+). It participates in protein modification; protein glycosylation. Inhibited by Cu(2+) and Zn(2+). In terms of biological role, involved in cell wall synthesis. Preferentially catalyzes the addition of fucose in alpha 1-3 linkage to the first GlcNAc residue next to the peptide chains in N-glycans. This Arabidopsis thaliana (Mouse-ear cress) protein is Glycoprotein 3-alpha-L-fucosyltransferase A (FUT11).